A 348-amino-acid chain; its full sequence is Histidinol-phosphate aminotransferase (348 aa).

Residue Lys210 is modified to N6-(pyridoxal phosphate)lysine.

The protein belongs to the class-II pyridoxal-phosphate-dependent aminotransferase family. Histidinol-phosphate aminotransferase subfamily. In terms of assembly, homodimer. Pyridoxal 5'-phosphate serves as cofactor.

The catalysed reaction is L-histidinol phosphate + 2-oxoglutarate = 3-(imidazol-4-yl)-2-oxopropyl phosphate + L-glutamate. It functions in the pathway amino-acid biosynthesis; L-histidine biosynthesis; L-histidine from 5-phospho-alpha-D-ribose 1-diphosphate: step 7/9. This is Histidinol-phosphate aminotransferase from Pseudomonas putida (strain ATCC 700007 / DSM 6899 / JCM 31910 / BCRC 17059 / LMG 24140 / F1).